The chain runs to 152 residues: 3-hydroxyacyl-[acyl-carrier-protein] dehydratase FabZ (152 aa).

H58 is an active-site residue.

The protein belongs to the thioester dehydratase family. FabZ subfamily.

Its subcellular location is the cytoplasm. The enzyme catalyses a (3R)-hydroxyacyl-[ACP] = a (2E)-enoyl-[ACP] + H2O. In terms of biological role, involved in unsaturated fatty acids biosynthesis. Catalyzes the dehydration of short chain beta-hydroxyacyl-ACPs and long chain saturated and unsaturated beta-hydroxyacyl-ACPs. The chain is 3-hydroxyacyl-[acyl-carrier-protein] dehydratase FabZ from Prochlorococcus marinus (strain AS9601).